A 475-amino-acid polypeptide reads, in one-letter code: Threonine synthase (475 aa).

N6-(pyridoxal phosphate)lysine is present on Lys-120.

The protein belongs to the threonine synthase family. The cofactor is pyridoxal 5'-phosphate.

The enzyme catalyses O-phospho-L-homoserine + H2O = L-threonine + phosphate. Its pathway is amino-acid biosynthesis; L-threonine biosynthesis; L-threonine from L-aspartate: step 5/5. In terms of biological role, catalyzes the gamma-elimination of phosphate from L-phosphohomoserine and the beta-addition of water to produce L-threonine. The polypeptide is Threonine synthase (thrC) (Methylobacillus glycogenes).